The primary structure comprises 336 residues: Nitrilase (336 aa).

One can recognise a CN hydrolase domain in the interval 5–278 (LKVACVQAAP…EGLLYATLDP (274 aa)). The Proton acceptor role is filled by E45. K127 functions as the Proton donor in the catalytic mechanism. The active-site Nucleophile is the C161.

This sequence belongs to the carbon-nitrogen hydrolase superfamily. Nitrilase family.

The catalysed reaction is a nitrile + 2 H2O = a carboxylate + NH4(+). The enzyme catalyses (indol-3-yl)acetonitrile + 2 H2O = (indol-3-yl)acetate + NH4(+). It carries out the reaction phenylpropanonitrile + 2 H2O = 3-phenylpropanoate + NH4(+). Its function is as follows. Arylacetonitrilase which is capable of hydrolyzing indole-3-acetonitrile (IAN) to the plant hormone indole-3-acetate (IAA), and allows the plant pathogenic bacterium to use IAN as a sole nitrogen source. Is also able to hydrolyze phenylpropionitrile (PPN), allowing the use of this compound as a sole nitrogen source. This enzyme may represent an additional mechanism for IAA biosynthesis or may be used to degrade and assimilate aldoximes and nitriles produced during host plant secondary metabolism. In Pseudomonas syringae pv. syringae (strain B728a), this protein is Nitrilase.